The following is a 394-amino-acid chain: Flagellin A (394 aa).

Belongs to the bacterial flagellin family.

The protein localises to the secreted. Its subcellular location is the bacterial flagellum. Flagellin is the subunit protein which polymerizes to form the filaments of bacterial flagella. Homomer of FlaA is able to form a functional filament. This chain is Flagellin A (flaA), found in Rhizobium meliloti (strain 1021) (Ensifer meliloti).